The sequence spans 363 residues: LIM and cysteine-rich domains protein 1 (363 aa).

Serine 16 bears the Phosphoserine mark. The PET domain occupies methionine 99–glycine 206. The disordered stretch occupies residues alanine 200 to aspartate 234. The span at proline 208–glycine 220 shows a compositional bias: basic and acidic residues. LIM zinc-binding domains follow at residues tyrosine 239–proline 304 and arginine 305–serine 363.

As to quaternary structure, interacts with beta-dystroglycan. Interacts with GATA1, GATA4 and GATA6.

It is found in the cytoplasm. It localises to the nucleus. Its function is as follows. Transcriptional cofactor that restricts GATA6 function by inhibiting DNA-binding, resulting in repression of GATA6 transcriptional activation of downstream target genes. Represses GATA6-mediated trans activation of lung- and cardiac tissue-specific promoters. Inhibits DNA-binding by GATA4 and GATA1 to the cTNC promoter. Plays a critical role in the development of cardiac hypertrophy via activation of calcineurin/nuclear factor of activated T-cells signaling pathway. This Bos taurus (Bovine) protein is LIM and cysteine-rich domains protein 1 (LMCD1).